Consider the following 219-residue polypeptide: Cytidylate kinase (219 aa).

Residue 10–18 participates in ATP binding; it reads GPAAAGKST.

Belongs to the cytidylate kinase family. Type 1 subfamily.

Its subcellular location is the cytoplasm. The catalysed reaction is CMP + ATP = CDP + ADP. It catalyses the reaction dCMP + ATP = dCDP + ADP. The sequence is that of Cytidylate kinase from Staphylococcus aureus (strain MRSA252).